Here is a 491-residue protein sequence, read N- to C-terminus: Putative pentatricopeptide repeat-containing protein At1g02420 (491 aa).

PPR repeat units lie at residues 179 to 209, 210 to 244, 245 to 279, 280 to 314, 315 to 349, 350 to 384, 385 to 419, and 420 to 454; these read DTACFNALLRTLCQEKSMTDARNVYHSLKHQ, FQPDLQTFNILLSGWKSSEEAEAFFEEMKGKGLKP, DVVTYNSLIDVYCKDREIEKAYKLIDKMREEEETP, DVITYTTVIGGLGLIGQPDKAREVLKEMKEYGCYP, DVAAYNAAIRNFCIARRLGDADKLVDEMVKKGLSP, NATTYNLFFRVLSLANDLGRSWELYVRMLGNECLP, NTQSCMFLIKMFKRHEKVDMAMRLWEDMVVKGFGS, and YSLVSDVLLDLLCDLAKVEEAEKCLLEMVEKGHRP.

The protein belongs to the PPR family. P subfamily.

The chain is Putative pentatricopeptide repeat-containing protein At1g02420 from Arabidopsis thaliana (Mouse-ear cress).